A 581-amino-acid chain; its full sequence is MQYSHHCEHLLERLNKQREAGFLCDCTIVIGEFQFKAHRNVLASFSEYFGAIYRSTSENNVFLDQSQVKADGFQKLLEFIYTGTLNLDSWNVKEIHQAADYLKVEEVVTKCKIKMEDFAFIANPSSTEISSITGNIELNQQTCLLTLRDYNSREKSEVSTDLVQANPKQGALAKKSSQTKKKKKAFNSQKTGQNKTVQYPSDILENASVELFLDANKLSTPIIEQVAQRSNSELELTSVVENTFPAQDIVQTVTVKRKRGKSQPNCALKEHSMSNIASVKNSYELESSGEELDQRYSKAKPMCNTCGKVFSEASSLRRHMRIHKGVKPYVCHLCGKAFTQCNQLKTHVRTHTGEKPYKCELCDKGFAQKCQLVFHSRMHHGEEKPYKCDVCNLQFATSSNLKIHARKHSGEKPYVCDRCGQRFAQASTLTYHVRRHTGEKPYVCDTCGKAFAVSSSLITHSRKHTGERPFICELCGNSYTDIKNLKKHKTKVHSGADKILDSSIEDHPLNEQDSIQKSPLSETLDVKPSDVTLPLTLPLGAEDHHLLLPVADSQPPAPDALLRPAANGYSEPQLIFLQQLY.

The BTB domain occupies 24–89 (CDCTIVIGEF…IYTGTLNLDS (66 aa)). Residues 167 to 193 (PKQGALAKKSSQTKKKKKAFNSQKTGQ) form a disordered region. 2 short sequence motifs (nuclear localization signal) span residues 174-190 (KKSSQTKKKKKAFNSQK) and 256-261 (KRKRGK). S288 is modified (phosphoserine). C2H2-type zinc fingers lie at residues 301 to 323 (PMCNTCGKVFSEASSLRRHMRIH), 329 to 351 (YVCHLCGKAFTQCNQLKTHVRTH), 357 to 380 (YKCELCDKGFAQKCQLVFHSRMHH), 386 to 408 (YKCDVCNLQFATSSNLKIHARKH), 414 to 436 (YVCDRCGQRFAQASTLTYHVRRH), 442 to 464 (YVCDTCGKAFAVSSSLITHSRKH), and 470 to 493 (FICELCGNSYTDIKNLKKHKTKVH).

It belongs to the krueppel C2H2-type zinc-finger protein family.

It localises to the nucleus. This chain is Myoneurin (MYNN), found in Bos taurus (Bovine).